The following is an 83-amino-acid chain: Putative defensin-like protein 131 (83 aa).

The signal sequence occupies residues 1 to 34; it reads MAKNRVLTIFYCTIYYCICFKYVLLGMVVEKTQG. 4 disulfide bridges follow: cysteine 37–cysteine 83, cysteine 46–cysteine 65, cysteine 51–cysteine 77, and cysteine 55–cysteine 79.

The protein belongs to the DEFL family.

The protein resides in the secreted. In Arabidopsis thaliana (Mouse-ear cress), this protein is Putative defensin-like protein 131 (LCR29).